The chain runs to 147 residues: Lipoprotein signal peptidase (147 aa).

Helical transmembrane passes span 10–30 (ISIF…IKFL), 34–54 (GIVK…GTAF), 59–79 (FLGS…LVYM), and 87–107 (WFIY…RLIY). Active-site residues include Asp112 and Asp130. The chain crosses the membrane as a helical span at residues 121-141 (LHWPAFNVADSAISIGIVLFV).

It belongs to the peptidase A8 family.

The protein localises to the cell inner membrane. It catalyses the reaction Release of signal peptides from bacterial membrane prolipoproteins. Hydrolyzes -Xaa-Yaa-Zaa-|-(S,diacylglyceryl)Cys-, in which Xaa is hydrophobic (preferably Leu), and Yaa (Ala or Ser) and Zaa (Gly or Ala) have small, neutral side chains.. It functions in the pathway protein modification; lipoprotein biosynthesis (signal peptide cleavage). Its function is as follows. This protein specifically catalyzes the removal of signal peptides from prolipoproteins. The protein is Lipoprotein signal peptidase of Thermodesulfovibrio yellowstonii (strain ATCC 51303 / DSM 11347 / YP87).